The chain runs to 294 residues: Proline iminopeptidase (294 aa).

The AB hydrolase-1 domain occupies 27-277; it reads PPLVLLHGGP…GCGHMSFVEK (251 aa). Ser105 (nucleophile) is an active-site residue. Asp244 is a catalytic residue. Residue His271 is the Proton donor of the active site.

Belongs to the peptidase S33 family.

It localises to the cell envelope. It carries out the reaction Release of N-terminal proline from a peptide.. Its function is as follows. Releases the N-terminal proline from various substrates. This Lactobacillus helveticus (strain DPC 4571) protein is Proline iminopeptidase.